Reading from the N-terminus, the 249-residue chain is Metallo-beta-lactamase type 2 (249 aa).

An N-terminal signal peptide occupies residues 1 to 22 (MLKKIKISLILALGLTSLQAFG). Positions 98, 100, 102, 161, and 180 each coordinate Zn(2+). A substrate-binding site is contributed by Lys-183. A Zn(2+)-binding site is contributed by His-222.

The protein belongs to the metallo-beta-lactamase superfamily. Class-B beta-lactamase family. Monomer. It depends on Zn(2+) as a cofactor.

The protein resides in the periplasm. The catalysed reaction is a beta-lactam + H2O = a substituted beta-amino acid. Confers resistance to the different beta-lactams antibiotics (penicillin, cephalosporin and carbapenem) via the hydrolysis of the beta-lactam ring. The sequence is that of Metallo-beta-lactamase type 2 (blaB2) from Elizabethkingia meningoseptica (Chryseobacterium meningosepticum).